The following is a 295-amino-acid chain: MSKSSKLCRKTSCPRSNIFCNLIDKIVKRPSLQFLGQWGYHCYEPRIYRTLAKILRYVDLDGFDILLSDYIAFVEKSGYRFELNFNLEFTEICVNTILYWVFARKGNPDFVELLLKKTKDYVQDRSCNLALIWRTFTPVYCPSPLSGITPLLYVAQTRQSNILKILLQYGILEREKNPINIVITILLYPSRVRIMVDHELVDIQEDAKTCLVLCSRVLSAISIREIETQLSLGRRPIISNWLDYIPSTRYKDPCELSHLCRITIRAQLLTNNMLPNGIFSLQIPXRLQKYLNLES.

An ANK repeat occupies 146–176 (SGITPLLYVAQTRQSNILKILLQYGILEREK). In terms of domain architecture, SOCS box spans 232-295 (LGRRPIISNW…RLQKYLNLES (64 aa)).

The protein belongs to the ankyrin SOCS box (ASB) family.

It functions in the pathway protein modification; protein ubiquitination. Its function is as follows. May be a substrate-recognition component of a SCF-like ECS (Elongin-Cullin-SOCS-box protein) E3 ubiquitin-protein ligase complex which mediates the ubiquitination and subsequent proteasomal degradation of target proteins. This is Ankyrin repeat and SOCS box protein 17 (ASB17) from Canis lupus familiaris (Dog).